The primary structure comprises 296 residues: Syntenin-2 (296 aa).

2 PDZ domains span residues 112–191 and 196–271; these read EIHL…VRDR and TVTM…IPTV.

Monomer and homodimer. Interacts with SDCBP. Interacts with TM4SF1.

Its subcellular location is the cytoplasm. It is found in the nucleus. The protein resides in the nucleolus. The protein localises to the nucleoplasm. It localises to the cell membrane. Its subcellular location is the nucleus speckle. Its function is as follows. Binds phosphatidylinositol 4,5-bisphosphate (PIP2). May play a role in the organization of nuclear PIP2, cell division and cell survival. This chain is Syntenin-2 (Sdcbp2), found in Rattus norvegicus (Rat).